The primary structure comprises 133 residues: ATP synthase epsilon chain, chloroplastic (133 aa).

This sequence belongs to the ATPase epsilon chain family. In terms of assembly, F-type ATPases have 2 components, CF(1) - the catalytic core - and CF(0) - the membrane proton channel. CF(1) has five subunits: alpha(3), beta(3), gamma(1), delta(1), epsilon(1). CF(0) has three main subunits: a, b and c.

The protein localises to the plastid. Its subcellular location is the chloroplast thylakoid membrane. In terms of biological role, produces ATP from ADP in the presence of a proton gradient across the membrane. The sequence is that of ATP synthase epsilon chain, chloroplastic from Helianthus annuus (Common sunflower).